Reading from the N-terminus, the 1195-residue chain is Chromosome partition protein Smc (1195 aa).

33–40 (PNGSGKSN) is an ATP binding site. 3 coiled-coil regions span residues 185–241 (GVAQ…RQEQ), 273–348 (DAAT…IQAL), and 380–528 (QYQQ…QETQ). The region spanning 542–658 (PGVHGLVAQL…FERLDQARRY (117 aa)) is the SMC hinge domain. A coiled-coil region spans residues 698 to 1043 (GESAEVRAIR…ELLLRIENFT (346 aa)).

It belongs to the SMC family. Homodimer.

It localises to the cytoplasm. In terms of biological role, required for chromosome condensation and partitioning. The protein is Chromosome partition protein Smc of Synechococcus sp. (strain ATCC 27144 / PCC 6301 / SAUG 1402/1) (Anacystis nidulans).